Consider the following 990-residue polypeptide: MISSSMSYRHSTNSVYTLNPHLNIPISTSTTIPPTSFYANNTPEMIQSQSENTNTNNINNSSSNINNNNNNTPDSMSMSTSLSSSPSVSFNHLDLNSINNKINNNTTTNNNNNNNNNNDDKFDTNALKLSNTMIIKNNNNNNNNNNNNNNNNNNNNNNNNNNNNNNNNNNNNNNNNNNNNNNNNNNNSNSNIEINVPSIQFDNEPAMEVDSVAPLNVPSNHTRTTLAMHNTKSLSTSNIGLLNILPNQQSSSSSSLSSTTTTTTTTSSSLLMPQSLFNNSTYNNHHNNNNSSNAGIVGGLNGSTSSLPTQAQVQLQQMQQQMQQHQQHQYKKANLSSLSTVVDNNLNNNPMNTSTSSPAQPNASPFSFSSSSLFSNSSLSNSGSGSASTTSTSTSSSNSMSSSPPPSLKTSFSQLDEDREKMRLEFEMIKKPEMASKKSHKHHQRHYSHNDLDNRKHDEEKFFSALQPNNYGKNRYHDVLPNESTRVRLTPIESGDGDYINANYINGEVPNSYRYYIACQAPLPSTIKDFWRMVWEERSSVIVCLTKLEENGKKKADVYYPETSQAQEYGSFWIHLHKKVMFKDIGVSSLHLYKKGEEFPREVVLLHYTQWPDCGAPPSSSHIRTLSVMVNTFKARGSAKNTNGPVIVHCSAGIGRSGTFISININMAKIERFGNDPSQMNISIKDSVLELRRQRRGMVQTLDQYIFIFKVINDVLTDMGIRSLSSPSKRRSCEMIKSTPMPRLDISIPPPLTFTPKDFQSSISPSTDMIASLSIITQMTQTLKFPPQQQQDNPFSKSSIKISPSPLNSTNISIPKNQQFQHPFQIQPQLDLNLQQQQQQSSQQLNDNPPLNMSSNSIKFPPVTSLSSCHLFEDSKNNDNNNKQQQQQQQQQQKNNQQCSGFSHFLNNNNNNDNNGSSGGGFNGSFLFNSNNSGSSSTNSECSNNNKNNNNNSNNNNNNNNNKNSDNNGTKDKDENDSCESPRVTPIKCF.

4 disordered regions span residues 47–88 (QSQS…SPSV), 100–193 (NKIN…SNIE), 246–414 (PNQQ…SFSQ), and 431–452 (KPEM…HNDL). 2 stretches are compositionally biased toward low complexity: residues 52-88 (NTNT…SPSV) and 100-117 (NKIN…NNNN). Residues 127 to 136 (LKLSNTMIIK) show a composition bias toward polar residues. 5 stretches are compositionally biased toward low complexity: residues 137–191 (NNNN…SNSN), 250–271 (SSSS…SSLL), 278–293 (NNST…NSSN), 310–327 (QAQV…QHQQ), and 334–413 (NLSS…TSFS). The region spanning 422–715 (MRLEFEMIKK…IFIFKVINDV (294 aa)) is the Tyrosine-protein phosphatase domain. Basic residues predominate over residues 437–447 (KKSHKHHQRHY). Catalysis depends on C650, which acts as the Phosphocysteine intermediate. Over residues 786–795 (PPQQQQDNPF) the composition is skewed to polar residues. Disordered regions lie at residues 786–814 (PPQQ…NISI) and 834–990 (LQQQ…IKCF). Composition is skewed to low complexity over residues 796-806 (SKSSIKISPSP) and 834-850 (LQQQ…DNPP). Polar residues predominate over residues 851-868 (LNMSSNSIKFPPVTSLSS). Composition is skewed to low complexity over residues 878 to 916 (NDNN…DNNG) and 924 to 968 (GSFL…SDNN).

The protein belongs to the protein-tyrosine phosphatase family. Non-receptor class subfamily. In terms of tissue distribution, in the anterior-like and prestalk cell types.

It is found in the cytoplasm. It carries out the reaction O-phospho-L-tyrosyl-[protein] + H2O = L-tyrosyl-[protein] + phosphate. Its function is as follows. Seems to dephosphorylate a protein of 130 kDa (p130). The protein is Tyrosine-protein phosphatase 3 (ptpC) of Dictyostelium discoideum (Social amoeba).